Consider the following 447-residue polypeptide: Diaminopimelate decarboxylase (447 aa).

K72 bears the N6-(pyridoxal phosphate)lysine mark. Residues G258 and 300–303 (EPGR) contribute to the pyridoxal 5'-phosphate site. Substrate is bound by residues R303, R344, and Y348. C375 acts as the Proton donor in catalysis. Substrate contacts are provided by E376 and Y405. Pyridoxal 5'-phosphate is bound at residue Y405.

It belongs to the Orn/Lys/Arg decarboxylase class-II family. LysA subfamily. As to quaternary structure, homodimer. It depends on pyridoxal 5'-phosphate as a cofactor.

The enzyme catalyses meso-2,6-diaminopimelate + H(+) = L-lysine + CO2. It participates in amino-acid biosynthesis; L-lysine biosynthesis via DAP pathway; L-lysine from DL-2,6-diaminopimelate: step 1/1. Specifically catalyzes the decarboxylation of meso-diaminopimelate (meso-DAP) to L-lysine. This chain is Diaminopimelate decarboxylase, found in Mycobacterium bovis (strain ATCC BAA-935 / AF2122/97).